Consider the following 66-residue polypeptide: uncharacterized protein (66 aa).

The protein to M.jannaschii MJ0582.

This is an uncharacterized protein from Methanocaldococcus jannaschii (strain ATCC 43067 / DSM 2661 / JAL-1 / JCM 10045 / NBRC 100440) (Methanococcus jannaschii).